A 502-amino-acid chain; its full sequence is Cytochrome P450 monooxygenase prhN (502 aa).

A helical transmembrane segment spans residues 14-30; sequence SGALLIVGILLLRWALW. Asparagine 165 carries N-linked (GlcNAc...) asparagine glycosylation. A heme-binding site is contributed by cysteine 443. Asparagine 474 is a glycosylation site (N-linked (GlcNAc...) asparagine).

The protein belongs to the cytochrome P450 family. Requires heme as cofactor.

Its subcellular location is the membrane. It participates in secondary metabolite biosynthesis; terpenoid biosynthesis. Its function is as follows. Cytochrome P450 monooxygenase; part of the gene cluster that mediates the biosynthesis of paraherquonin, a meroterpenoid with a unique, highly congested hexacyclic molecular architecture. The first step of the pathway is the synthesis of 3,5-dimethylorsellinic acid (DMOA) by the polyketide synthase prhL. Synthesis of DMOA is followed by farnesylation by the prenyltransferase prhE, methylesterification by the methyl-transferase prhM, epoxidation of the prenyl chain by the flavin-dependent monooxygenase prhF, and cyclization of the farnesyl moiety by the terpene cyclase prhH, to yield the tetracyclic intermediate, protoaustinoid A. The short chain dehydrogenase prhI then oxidizes the C-3 alcohol group of the terpene cyclase product to transform protoaustinoid A into protoaustinoid B. The FAD-binding monooxygenase prhJ catalyzes the oxidation of protoaustinoid B into preaustinoid A which is further oxidized into preaustinoid A1 by FAD-binding monooxygenase phrK. Finally, prhA leads to berkeleydione via the berkeleyone B intermediate. PrhA is a multifunctional dioxygenase that first desaturates at C5-C6 to form berkeleyone B, followed by rearrangement of the A/B-ring to form the cycloheptadiene moiety in berkeleydione. Berkeleydione serves as the key intermediate for the biosynthesis of paraherquonin as well as many other meroterpenoids. The cytochrome P450 monooxygenases prhB, prhD, and prhN, as well as the isomerase prhC, are probably involved in the late stage of paraherquonin biosynthesis, after the production of berkeleydione. Especially prhC might be a multifunctional enzyme that catalyzes the D-ring expansion via intramolecular methoxy rearrangement, as well as the hydrolysis of the expanded D-ring. This is Cytochrome P450 monooxygenase prhN from Penicillium brasilianum.